The chain runs to 172 residues: Conglutin-7 (172 aa).

The first 21 residues, 1-21 (MAKLTILVALALFLLAAHASA), serve as a signal peptide directing secretion. 4 disulfides stabilise this stretch: Cys-33–Cys-116, Cys-45–Cys-103, Cys-104–Cys-152, and Cys-118–Cys-160. The segment at 54 to 98 (QRDEDSYGRDPYSPSQDPYSPSQDPDRRDPYSPSPYDRRGAGSSQ) is disordered. Residues 62 to 76 (RDPYSPSQDPYSPSQ) show a composition bias toward low complexity. Pro-67, Pro-74, and Pro-86 each carry 4-hydroxyproline. The segment covering 77-98 (DPDRRDPYSPSPYDRRGAGSSQ) has biased composition (basic and acidic residues).

Belongs to the 2S seed storage albumins family. In terms of processing, the hydroxyproline modifications determined by mass spectrometry are probably 4-hydroxyproline as determined for other extracellular plant proteins. As to expression, expressed in seeds, not expressed in leaves, roots and pegs.

Functionally, weak inhibitor of trypsin. This is Conglutin-7 from Arachis hypogaea (Peanut).